Consider the following 391-residue polypeptide: Tyrosine recombinase XerC-like (391 aa).

The Core-binding (CB) domain occupies 64 to 148 (VTLGDLMHTW…FLKTFFNYAV (85 aa)). The 210-residue stretch at 175–384 (TEIETFSDEE…IPKQKTNAVE (210 aa)) folds into the Tyr recombinase domain. Residues Arg210, Lys244, His335, Arg338, and His361 contribute to the active site. Tyr371 functions as the O-(3'-phospho-DNA)-tyrosine intermediate in the catalytic mechanism.

This sequence belongs to the 'phage' integrase family.

The protein resides in the cytoplasm. Site-specific tyrosine recombinase, which acts by catalyzing the cutting and rejoining of the recombining DNA molecules. This Caldanaerobacter subterraneus subsp. tengcongensis (strain DSM 15242 / JCM 11007 / NBRC 100824 / MB4) (Thermoanaerobacter tengcongensis) protein is Tyrosine recombinase XerC-like.